We begin with the raw amino-acid sequence, 390 residues long: Prostaglandin E2 receptor EP3 subtype (390 aa).

Topologically, residues 1-53 (MKETRGYGGDAPFCTRLNHSYTGMWAPERSAEARGNLTRPPGSGEDCGSVSVA) are extracellular. N-linked (GlcNAc...) asparagine glycans are attached at residues asparagine 18 and asparagine 36. Residues 54–78 (FPITMLLTGFVGNALAMLLVSRSYR) form a helical membrane-spanning segment. Residues 79-91 (RRESKRKKSFLLC) are Cytoplasmic-facing. The chain crosses the membrane as a helical span at residues 92 to 112 (IGWLALTDLVGQLLTTPVVIV). Topologically, residues 113–131 (VYLSKQRWEHIDPSGRLCT) are extracellular. The helical transmembrane segment at 132–153 (FFGLTMTVFGLSSLFIASAMAV) threads the bilayer. The Cytoplasmic portion of the chain corresponds to 154–175 (ERALAIRAPHWYASHMKTRATR). Residues 176-197 (AVLLGVWLAVLAFALLPVLGVG) traverse the membrane as a helical segment. Residues 198 to 227 (QYTVQWPGTWCFISTGRGGNGTSSSHNWGN) are Extracellular-facing. The helical transmembrane segment at 228–253 (LFFASAFAFLGLLALTVTFSCNLATI) threads the bilayer. The Cytoplasmic portion of the chain corresponds to 254-283 (KALVSRCRAKATASQSSAQWGRITTETAIQ). Residues 284-307 (LMGIMCVLSVCWSPLLIMMLKMIF) form a helical membrane-spanning segment. Topologically, residues 308–327 (NQTSVEHCKTHTEKQKECNF) are extracellular. Residues 328-349 (FLIAVRLASLNQILDPWVYLLL) traverse the membrane as a helical segment. Residues 350–390 (RKILLRKFCQIRYHTNNYASSSTSLPCQCSSTLMWSDHLER) are Cytoplasmic-facing.

Belongs to the G-protein coupled receptor 1 family. In terms of assembly, interacts (via C-terminus) with MKLN1. As to expression, detected in kidney. Expressed in small intestine, heart, pancreas, gastric fundic mucosa, mammary artery and pulmonary vessels.

Its subcellular location is the cell membrane. In terms of biological role, receptor for prostaglandin E2 (PGE2). The activity of this receptor can couple to both the inhibition of adenylate cyclase mediated by G(i) proteins, and to an elevation of intracellular calcium. Required for normal development of fever in response to pyrinogens, including IL1B, prostaglandin E2 and bacterial lipopolysaccharide (LPS). Required for normal potentiation of platelet aggregation by prostaglandin E2, and thus plays a role in the regulation of blood coagulation. Required for increased HCO3(-) secretion in the duodenum in response to mucosal acidification, and thereby contributes to the protection of the mucosa against acid-induced ulceration. Not required for normal kidney function, normal urine volume and osmolality. This is Prostaglandin E2 receptor EP3 subtype (PTGER3) from Homo sapiens (Human).